Here is a 209-residue protein sequence, read N- to C-terminus: FK506-binding protein 2B (209 aa).

A signal peptide spans methionine 1–alanine 19. The region spanning glycine 47–lysine 136 is the PPIase FKBP-type domain. The helical transmembrane segment at phenylalanine 157–phenylalanine 177 threads the bilayer. The stretch at lysine 178–lysine 207 forms a coiled coil. Residues glutamate 190–glutamate 209 are disordered. Over residues serine 200–glutamate 209 the composition is skewed to basic and acidic residues.

It belongs to the FKBP-type PPIase family. FKBP2 subfamily.

The protein localises to the membrane. The catalysed reaction is [protein]-peptidylproline (omega=180) = [protein]-peptidylproline (omega=0). With respect to regulation, inhibited by both FK506 and rapamycin. PPIases accelerate the folding of proteins. It catalyzes the cis-trans isomerization of proline imidic peptide bonds in oligopeptides. The protein is FK506-binding protein 2B (FKBP3) of Rhizopus delemar (strain RA 99-880 / ATCC MYA-4621 / FGSC 9543 / NRRL 43880) (Mucormycosis agent).